A 264-amino-acid polypeptide reads, in one-letter code: uncharacterized protein (264 aa).

The a divalent metal cation site is built by His7, His9, Glu102, His138, His163, and Asp213.

This sequence belongs to the metallo-dependent hydrolases superfamily. TatD-type hydrolase family. A divalent metal cation serves as cofactor.

This is an uncharacterized protein from Buchnera aphidicola subsp. Acyrthosiphon pisum (strain APS) (Acyrthosiphon pisum symbiotic bacterium).